The following is a 203-amino-acid chain: TATA-binding protein 2 (203 aa).

A run of 2 repeats spans residues 28-104 (LQNI…ARII) and 118-195 (IQNI…YPVL).

The protein belongs to the TBP family. As to quaternary structure, belongs to the TFIID complex together with the TBP-associated factors (TAFs). Binds DNA as monomer. Interacts with RF2A and TFIIB. Interacts with CWZF7.

The protein resides in the nucleus. General transcription factor that functions at the core of the DNA-binding multiprotein factor TFIID. Binding of TFIID to the TATA box is the initial transcriptional step of the pre-initiation complex (PIC), playing a role in the activation of eukaryotic genes transcribed by RNA polymerase II. The protein is TATA-binding protein 2 (TBP2) of Oryza sativa subsp. japonica (Rice).